Here is a 320-residue protein sequence, read N- to C-terminus: Nucleotide-binding protein Psyc_0118 (320 aa).

ATP is bound at residue 32-39 (GRSGSGKT). GTP is bound at residue 82 to 85 (DIRT).

It belongs to the RapZ-like family.

In terms of biological role, displays ATPase and GTPase activities. In Psychrobacter arcticus (strain DSM 17307 / VKM B-2377 / 273-4), this protein is Nucleotide-binding protein Psyc_0118.